We begin with the raw amino-acid sequence, 168 residues long: Small ribosomal subunit protein uS4 (168 aa).

The region spanning arginine 103–lysine 167 is the S4 RNA-binding domain.

Belongs to the universal ribosomal protein uS4 family. As to quaternary structure, part of the 30S ribosomal subunit. Contacts protein S5. The interaction surface between S4 and S5 is involved in control of translational fidelity.

Its function is as follows. One of the primary rRNA binding proteins, it binds directly to 16S rRNA where it nucleates assembly of the body of the 30S subunit. In terms of biological role, with S5 and S12 plays an important role in translational accuracy. This Staphylothermus marinus (strain ATCC 43588 / DSM 3639 / JCM 9404 / F1) protein is Small ribosomal subunit protein uS4.